We begin with the raw amino-acid sequence, 347 residues long: MCSLITQLCDAGQLADYVGLGWLNAVSSQPYLVQALGLQPPPRRVDVDAAFRDAKGLHGHQPWVATPLPGQTVRALFIGINYYGTSAALSGCCNDVKQMLATLQKKGLPINEAVILVDEDNFPGRTDQPTRDNIVRYMAWLVKDAKPGDVLFFHYSGHGTQCKSRGDSDEKYDQCIAPVDFQKSGCIVDDDIHKLLFSRLPEKVRLTAVFDCCHSGSIMDLPFTYVCSGGEQASGTPHMKRIREGNDVLGDVMMISGCADEQTSADVKNTATFGTGSTGAGGAATQCITCMLMNNQSLSYGKLLIETRDMLKRKGFKQVPQLSASKAIDLDQTFSLTEMFSVDRSIQ.

The propeptide occupies 1–55 (MCSLITQLCDAGQLADYVGLGWLNAVSSQPYLVQALGLQPPPRRVDVDAAFRDAK). The interval 1–70 (MCSLITQLCD…QPWVATPLPG (70 aa)) is regulates substrate access to the active site. Residue His-158 is part of the active site. Ca(2+)-binding residues include Asp-173, Asp-189, and Asp-190. Residue Cys-213 is part of the active site. Position 220 (Asp-220) interacts with Ca(2+).

This sequence belongs to the peptidase C14B family. In terms of assembly, monomer. In terms of processing, auto-proteolytic cleavage of the propeptide after Lys-55 and between the large and small subunits after Lys-268 is required for catalytic activity towards large protein substrates but is dispensable towards small oligopeptide substrates. After processing, the propeptide and the large and small subunits remain associated by non-covalent bonds. In vivo, the unprocessed enzyme appears to be the predominant form.

It localises to the recycling endosome. Its activity is regulated as follows. Activated by Ca(2+). In response to calcium binding, the 280-loop, a disordered loop consisting of residues 269-275, undergoes a conformational change which stabilizes substrates in the active site. The binding to the substrate triggers the release of the N-terminal region resulting in the activation of the enzyme. Proteolytic cleavage is required for catalytic activity towards large protein substrates. Its function is as follows. Cysteine protease that cleaves specifically after arginine or lysine residues. This chain is Metacaspase-2, found in Trypanosoma brucei brucei (strain 927/4 GUTat10.1).